The sequence spans 316 residues: MERLLMNVEEVVTREEFLRLKGGSAYLGFEPLWPIHIGWLIWAYKLAELKEAGFDVIVLVATWHAWINDKGSIEELRAHGERVRAVLDRIGKFKYVYGDDVAKDPKYWELVVKIAKETSLARVKRATPVMGRRAEEVELDFSKLMYPLMQVADIFYLGVDVAVGGMDQRRAHMLARDVAEKLGLKKPIALHTPIITSLSGTGRMEGTHREIDEVYAMYKMSKSKPQSAILITDSEEDVRKKIWAAYCPPRETKFNPVFEIAAYLLIPYHGPLEIKGRRYEEGNALERDYREGVVTPQELKEAVASALVGLLSKLKL.

The L-tyrosine site is built by Y26, Y146, Q150, D153, and Q168. The 'KMSKS' region signature appears at 219–223 (KMSKS). K222 is a binding site for ATP.

It belongs to the class-I aminoacyl-tRNA synthetase family. TyrS type 4 subfamily. Homodimer.

It localises to the cytoplasm. It carries out the reaction tRNA(Tyr) + L-tyrosine + ATP = L-tyrosyl-tRNA(Tyr) + AMP + diphosphate + H(+). Functionally, catalyzes the attachment of tyrosine to tRNA(Tyr) in a two-step reaction: tyrosine is first activated by ATP to form Tyr-AMP and then transferred to the acceptor end of tRNA(Tyr). The polypeptide is Tyrosine--tRNA ligase 2 (Pyrobaculum aerophilum (strain ATCC 51768 / DSM 7523 / JCM 9630 / CIP 104966 / NBRC 100827 / IM2)).